The sequence spans 207 residues: Large ribosomal subunit protein bL25 (207 aa).

A disordered region spans residues 1–20; that stretch reads MANHQIKAQRRKDEGKGASR.

It belongs to the bacterial ribosomal protein bL25 family. CTC subfamily. Part of the 50S ribosomal subunit; part of the 5S rRNA/L5/L18/L25 subcomplex. Contacts the 5S rRNA. Binds to the 5S rRNA independently of L5 and L18.

In terms of biological role, this is one of the proteins that binds to the 5S RNA in the ribosome where it forms part of the central protuberance. This Xylella fastidiosa (strain M23) protein is Large ribosomal subunit protein bL25.